The following is a 272-amino-acid chain: Type III pantothenate kinase (272 aa).

Residue 6–13 participates in ATP binding; it reads DVRNTHTV. 109-112 is a substrate binding site; that stretch reads GADR. The active-site Proton acceptor is aspartate 111. Residue aspartate 131 coordinates K(+). Serine 134 provides a ligand contact to ATP. Threonine 186 serves as a coordination point for substrate.

The protein belongs to the type III pantothenate kinase family. As to quaternary structure, homodimer. NH4(+) is required as a cofactor. It depends on K(+) as a cofactor.

It is found in the cytoplasm. It carries out the reaction (R)-pantothenate + ATP = (R)-4'-phosphopantothenate + ADP + H(+). Its pathway is cofactor biosynthesis; coenzyme A biosynthesis; CoA from (R)-pantothenate: step 1/5. Functionally, catalyzes the phosphorylation of pantothenate (Pan), the first step in CoA biosynthesis. This is Type III pantothenate kinase from Mycobacterium ulcerans (strain Agy99).